The following is a 256-amino-acid chain: Sugar fermentation stimulation protein homolog (256 aa).

Positions 128–141 (TGSTDTSFSGTPPT) are enriched in low complexity. Residues 128–149 (TGSTDTSFSGTPPTNTEPANTK) are disordered.

It belongs to the SfsA family.

This is Sugar fermentation stimulation protein homolog from Shewanella sediminis (strain HAW-EB3).